The chain runs to 163 residues: NADH-quinone oxidoreductase subunit I (163 aa).

2 consecutive 4Fe-4S ferredoxin-type domains span residues 53 to 83 (LRRYPNGEERCIACKLCEAICPAQAITIEAG) and 94 to 123 (VRYDIDMVKCIYCGFCQEACPVDAIVEGPN). Positions 63, 66, 69, 73, 103, 106, 109, and 113 each coordinate [4Fe-4S] cluster.

This sequence belongs to the complex I 23 kDa subunit family. In terms of assembly, NDH-1 is composed of 14 different subunits. Subunits NuoA, H, J, K, L, M, N constitute the membrane sector of the complex. [4Fe-4S] cluster is required as a cofactor.

The protein localises to the cell inner membrane. The catalysed reaction is a quinone + NADH + 5 H(+)(in) = a quinol + NAD(+) + 4 H(+)(out). NDH-1 shuttles electrons from NADH, via FMN and iron-sulfur (Fe-S) centers, to quinones in the respiratory chain. The immediate electron acceptor for the enzyme in this species is believed to be ubiquinone. Couples the redox reaction to proton translocation (for every two electrons transferred, four hydrogen ions are translocated across the cytoplasmic membrane), and thus conserves the redox energy in a proton gradient. The sequence is that of NADH-quinone oxidoreductase subunit I from Rhizobium johnstonii (strain DSM 114642 / LMG 32736 / 3841) (Rhizobium leguminosarum bv. viciae).